The following is a 1463-amino-acid chain: MNTQEKHQFEPVLPQAHDDPTLSKPPIFFNRTADKGMIKRLIAWFLVHYGLADTVSMIEDLKQVGFQYATRAGISLGIEDLRIPPTKPRLLQEAHREINRMEFRYQQGYVSLVERFQKVIDTWNGTSELLKDDVVENFLATDPLNPVYMMAFSGARGNLSQVRQLVGMRGLMSNPQGEIIDLPIRSNFREGLTVTEYIISCYGARKGLVDTALRTANSGYLTRRLVDVAQDIVIRMTSCSPSAYPLISFTKSGKEVVYPLEERLLGRVLAIGAFNQEGELISGPDTAISQEIAVQLMDCDPKEILVRSVLLCKSKRGLCRLCYGWNLGTGTIVSIGEAVGIIAAQSIGEPGTQLTMRTFHTGGVFAGGVTNEIRAPHAGLVHYPRPIHPKWVRTRHGQFGILISEKIEIIFEHESKKTIQVFDAGTVLTIHEGEKVHTNQLIGEIPAHGTLVTGWRSLKSGVDGEVRFDELELLKQRPRSDRTSPVRLDPRVCNKAHLWILQGHVNTFEMPIQLVANIGDKVEKDSIVSTTKQVVSEEGRIIYRYDEKRGKEQTIITHAFGSVQFDGVDAWLPTKSQGIKQSIRTTGGKLSISSQGMTLSATKIKQEGIGSFDWPALAEPSIEEDEELEEAYKKTKDPIIQPTPYPLQYCVLPEQKYVIQAQEGWIISVLGGQSVGASQSLATYVDSQWEVEQGQLSIRSIEYRVHDQSWIQVITPSLVEIESGRGSYHLMAKAGWIIPISTKIRCKDYRLISGSILLGKWSLPISRFAVEQAASYPAILIRPIHTYPVYPTTIWDETINWQRGIASIGSNDWHPRCIAPTYQAPSYVESFKGRQTFTGEEKQEGNKPVEITSKNRRKSAANSSHETRMTQNRTWPIVLADTRIQKGASPIQIEWTWPHAKNPWISPNHGAIAGHIRFVNMTILDSSSISTKQELDHREAQVIPTTQTVSGVHRLTPLLEKTVFSQDDGEIQRMLPFSRALVKPVRTNRSKTRRNASGKTQVKAQARSQAKARSVRLKLKETVKTRSQEKFTNEMKKQLAKSSEGNKGFQIRQALFPKKLIRLMVVLRPVDIMTFATYGARVCIPLGAMIYQGEELFEGASTPISGQLIEIRRDRVTLRIGQPYRVGWQSRLMVTRDQIVKAEKVLAHLLYFKTKTGDIVQGLPKIEEILEARRKKGNEIIRSNLQDFVQQFYQDNLDEGFSRKYASTRTMRAMQVLILRRVQLVYRSQGVQISDKHLEIISLRMTSRVLVEKAYGTGILPGEIIEKRRADMLNQGRTRIRYCPIVLGITKASLTTKGFISSASFQETTRVLTQAVLQGKSDWLLGLKENVILGRLIPAGVGIYGHWVGPHEFNIKQMLKLWVLPPIITGQSTMRAMFHSTTRYWQDLEAVMESPNKLYPVTPYKCYPDTQHLAGLSIWMPEFEFRRFETFTEEEMVAAESLFTAHPNCHARRINNKQLNSLI.

Zn(2+) contacts are provided by Cys-239, Cys-312, Cys-319, and Cys-322. Disordered regions lie at residues Thr-836–Met-869 and Thr-987–Arg-1007. Residues Ala-860–Met-869 show a composition bias toward polar residues. Positions Thr-987–Ala-996 are enriched in basic residues. A compositionally biased stretch (polar residues) spans Ser-997–Arg-1007.

Belongs to the RNA polymerase beta' chain family. RpoC2 subfamily. In terms of assembly, in plastids the minimal PEP RNA polymerase catalytic core is composed of four subunits: alpha, beta, beta', and beta''. When a (nuclear-encoded) sigma factor is associated with the core the holoenzyme is formed, which can initiate transcription. Zn(2+) serves as cofactor.

It is found in the plastid. The protein localises to the chloroplast. It carries out the reaction RNA(n) + a ribonucleoside 5'-triphosphate = RNA(n+1) + diphosphate. Functionally, DNA-dependent RNA polymerase catalyzes the transcription of DNA into RNA using the four ribonucleoside triphosphates as substrates. The chain is DNA-directed RNA polymerase subunit beta'' from Nephroselmis olivacea (Green alga).